A 628-amino-acid chain; its full sequence is Phosphomethylpyrimidine synthase (628 aa).

Substrate is bound by residues Asn-225, Met-254, Tyr-283, His-319, 339 to 341 (SRG), 380 to 383 (DGLR), and Glu-419. His-423 serves as a coordination point for Zn(2+). Tyr-446 is a substrate binding site. Residue His-487 coordinates Zn(2+). Positions 567, 570, and 575 each coordinate [4Fe-4S] cluster.

This sequence belongs to the ThiC family. Homodimer. [4Fe-4S] cluster is required as a cofactor.

It carries out the reaction 5-amino-1-(5-phospho-beta-D-ribosyl)imidazole + S-adenosyl-L-methionine = 4-amino-2-methyl-5-(phosphooxymethyl)pyrimidine + CO + 5'-deoxyadenosine + formate + L-methionine + 3 H(+). The protein operates within cofactor biosynthesis; thiamine diphosphate biosynthesis. Catalyzes the synthesis of the hydroxymethylpyrimidine phosphate (HMP-P) moiety of thiamine from aminoimidazole ribotide (AIR) in a radical S-adenosyl-L-methionine (SAM)-dependent reaction. This Leptothrix cholodnii (strain ATCC 51168 / LMG 8142 / SP-6) (Leptothrix discophora (strain SP-6)) protein is Phosphomethylpyrimidine synthase.